A 155-amino-acid chain; its full sequence is Protein SprT-like (155 aa).

A SprT-like domain is found at 7–144 (QRHMEEVSLQ…CGSCGGKLKQ (138 aa)). H67 lines the Zn(2+) pocket. The active site involves E68. Residue H71 participates in Zn(2+) binding.

This sequence belongs to the SprT family. Requires Zn(2+) as cofactor.

Its subcellular location is the cytoplasm. The chain is Protein SprT-like from Listeria welshimeri serovar 6b (strain ATCC 35897 / DSM 20650 / CCUG 15529 / CIP 8149 / NCTC 11857 / SLCC 5334 / V8).